The sequence spans 127 residues: Small ribosomal subunit protein bS6 (127 aa).

It belongs to the bacterial ribosomal protein bS6 family.

Binds together with bS18 to 16S ribosomal RNA. In Acinetobacter baumannii (strain AB0057), this protein is Small ribosomal subunit protein bS6.